Reading from the N-terminus, the 208-residue chain is Cysteine-rich protein 2 (208 aa).

The LIM zinc-binding 1 domain occupies 5–57 (CPKCDKTVYFAEKVSSLGKDWHKFCLKCERCNKTLTPGGHAEHDGKPFCHKPC). K23 is modified (N6-acetyllysine). S104 carries the phosphoserine modification. The LIM zinc-binding 2 domain maps to 126–178 (CPRCNKRVYFAEKVTSLGKDWHRPCLRCERCSKTLTPGGHAEHDGQPYCHKPC). An N6-acetyllysine mark is found at K138 and K144.

As to quaternary structure, interacts with TGFB1I1. In terms of tissue distribution, expressed more abundantly in liver and kidney of females than that of males. Equally expressed in brain, lung and heart.

The chain is Cysteine-rich protein 2 (Crip2) from Rattus norvegicus (Rat).